The primary structure comprises 40 residues: MAETTGRIPLWLIGTVTGIPVIGLVGIFFYGSYSGLGSSL.

A helical transmembrane segment spans residues 8-28; that stretch reads IPLWLIGTVTGIPVIGLVGIF.

This sequence belongs to the PsbJ family. As to quaternary structure, PSII is composed of 1 copy each of membrane proteins PsbA, PsbB, PsbC, PsbD, PsbE, PsbF, PsbH, PsbI, PsbJ, PsbK, PsbL, PsbM, PsbT, PsbX, PsbY, PsbZ, Psb30/Ycf12, at least 3 peripheral proteins of the oxygen-evolving complex and a large number of cofactors. It forms dimeric complexes.

It localises to the plastid. The protein localises to the chloroplast thylakoid membrane. One of the components of the core complex of photosystem II (PSII). PSII is a light-driven water:plastoquinone oxidoreductase that uses light energy to abstract electrons from H(2)O, generating O(2) and a proton gradient subsequently used for ATP formation. It consists of a core antenna complex that captures photons, and an electron transfer chain that converts photonic excitation into a charge separation. The polypeptide is Photosystem II reaction center protein J (Cucumis sativus (Cucumber)).